A 222-amino-acid chain; its full sequence is Latexin (222 aa).

The Cystatin LXN-type 1 domain occupies 1–97 (MEIPPTHYAA…NFTFEGEIGK (97 aa)). Residue K55 is modified to N6-acetyllysine. Positions 98–117 (NPDEEDNTFYQSLMSLKRPL) are alpha-helical linker. One can recognise a Cystatin LXN-type 2 domain in the interval 118–222 (EAQDIPDNFG…SRLPKEGQAE (105 aa)).

This sequence belongs to the protease inhibitor I47 (latexin) family. In terms of tissue distribution, highly enriched in macrophages.

The protein resides in the cytoplasm. Its function is as follows. Hardly reversible, non-competitive, and potent inhibitor of CPA1, CPA2 and CPA4. May play a role in inflammation. The chain is Latexin (Lxn) from Mus musculus (Mouse).